Consider the following 212-residue polypeptide: Leucyl/phenylalanyl-tRNA--protein transferase (212 aa).

The protein belongs to the L/F-transferase family.

It localises to the cytoplasm. It carries out the reaction N-terminal L-lysyl-[protein] + L-leucyl-tRNA(Leu) = N-terminal L-leucyl-L-lysyl-[protein] + tRNA(Leu) + H(+). It catalyses the reaction N-terminal L-arginyl-[protein] + L-leucyl-tRNA(Leu) = N-terminal L-leucyl-L-arginyl-[protein] + tRNA(Leu) + H(+). The catalysed reaction is L-phenylalanyl-tRNA(Phe) + an N-terminal L-alpha-aminoacyl-[protein] = an N-terminal L-phenylalanyl-L-alpha-aminoacyl-[protein] + tRNA(Phe). Its function is as follows. Functions in the N-end rule pathway of protein degradation where it conjugates Leu, Phe and, less efficiently, Met from aminoacyl-tRNAs to the N-termini of proteins containing an N-terminal arginine or lysine. The protein is Leucyl/phenylalanyl-tRNA--protein transferase of Allorhizobium ampelinum (strain ATCC BAA-846 / DSM 112012 / S4) (Agrobacterium vitis (strain S4)).